The sequence spans 121 residues: LOB domain-containing protein 23 (121 aa).

In terms of domain architecture, LOB spans 4 to 105 (KRCAACKYLR…NELAKTQAEI (102 aa)).

The protein belongs to the LOB domain-containing protein family.

The polypeptide is LOB domain-containing protein 23 (LBD23) (Arabidopsis thaliana (Mouse-ear cress)).